The following is a 123-amino-acid chain: Large-conductance mechanosensitive channel (123 aa).

Helical transmembrane passes span 14–34 (VIDM…VKSL) and 67–87 (GSFL…FLMV).

It belongs to the MscL family. Homopentamer.

The protein resides in the cell membrane. Its function is as follows. Channel that opens in response to stretch forces in the membrane lipid bilayer. May participate in the regulation of osmotic pressure changes within the cell. The protein is Large-conductance mechanosensitive channel of Limosilactobacillus reuteri (strain DSM 20016) (Lactobacillus reuteri).